The following is a 151-amino-acid chain: D-aminoacyl-tRNA deacylase (151 aa).

The short motif at 142-143 is the Gly-cisPro motif, important for rejection of L-amino acids element; it reads GP.

Belongs to the DTD family. In terms of assembly, homodimer.

The protein resides in the cytoplasm. It carries out the reaction glycyl-tRNA(Ala) + H2O = tRNA(Ala) + glycine + H(+). The enzyme catalyses a D-aminoacyl-tRNA + H2O = a tRNA + a D-alpha-amino acid + H(+). An aminoacyl-tRNA editing enzyme that deacylates mischarged D-aminoacyl-tRNAs. Also deacylates mischarged glycyl-tRNA(Ala), protecting cells against glycine mischarging by AlaRS. Acts via tRNA-based rather than protein-based catalysis; rejects L-amino acids rather than detecting D-amino acids in the active site. By recycling D-aminoacyl-tRNA to D-amino acids and free tRNA molecules, this enzyme counteracts the toxicity associated with the formation of D-aminoacyl-tRNA entities in vivo and helps enforce protein L-homochirality. The sequence is that of D-aminoacyl-tRNA deacylase from Psychrobacter cryohalolentis (strain ATCC BAA-1226 / DSM 17306 / VKM B-2378 / K5).